A 208-amino-acid polypeptide reads, in one-letter code: Glycerol-3-phosphate acyltransferase (208 aa).

Helical transmembrane passes span 4-24 (LALS…AVLI), 56-76 (VAVL…GYFL), 80-100 (PFML…PIFF), 117-137 (PIGL…VVLF), and 139-159 (YSSL…WLIK).

It belongs to the PlsY family. Probably interacts with PlsX.

The protein localises to the cell inner membrane. The catalysed reaction is an acyl phosphate + sn-glycerol 3-phosphate = a 1-acyl-sn-glycero-3-phosphate + phosphate. The protein operates within lipid metabolism; phospholipid metabolism. Catalyzes the transfer of an acyl group from acyl-phosphate (acyl-PO(4)) to glycerol-3-phosphate (G3P) to form lysophosphatidic acid (LPA). This enzyme utilizes acyl-phosphate as fatty acyl donor, but not acyl-CoA or acyl-ACP. This Vibrio cholerae serotype O1 (strain ATCC 39541 / Classical Ogawa 395 / O395) protein is Glycerol-3-phosphate acyltransferase.